Here is a 231-residue protein sequence, read N- to C-terminus: MKRAVVVFSGGQDSTTCLIQALEQYDEVHCVTFDYGQRHRAEIDVAQQLSASLGVRAHKVLDVTMLNELAASSLTRDNIPVPAYDPSASGLPSTFVPGRNIVFFTFASIYAFQIEAEAIITGACETDFSGYPDCRDEFVKALNRAVNLGMARELRIETPLMWLNKAETWALADYWQQLPLIRHQTLTCYNGIIGDGCGDCAACHLRARGLDQYQQNPTSVMLEMERKTGLA.

Residue 8–18 participates in ATP binding; sequence FSGGQDSTTCL. Positions 188, 197, 200, and 203 each coordinate Zn(2+).

This sequence belongs to the QueC family. The cofactor is Zn(2+).

It carries out the reaction 7-carboxy-7-deazaguanine + NH4(+) + ATP = 7-cyano-7-deazaguanine + ADP + phosphate + H2O + H(+). It participates in purine metabolism; 7-cyano-7-deazaguanine biosynthesis. In terms of biological role, catalyzes the ATP-dependent conversion of 7-carboxy-7-deazaguanine (CDG) to 7-cyano-7-deazaguanine (preQ(0)). The protein is 7-cyano-7-deazaguanine synthase of Erwinia tasmaniensis (strain DSM 17950 / CFBP 7177 / CIP 109463 / NCPPB 4357 / Et1/99).